A 118-amino-acid polypeptide reads, in one-letter code: Aspartate 1-decarboxylase (118 aa).

Ser25 (schiff-base intermediate with substrate; via pyruvic acid) is an active-site residue. At Ser25 the chain carries Pyruvic acid (Ser). Thr57 provides a ligand contact to substrate. The active-site Proton donor is the Tyr58. 73–75 (GAA) is a substrate binding site.

This sequence belongs to the PanD family. Heterooctamer of four alpha and four beta subunits. Pyruvate is required as a cofactor. In terms of processing, is synthesized initially as an inactive proenzyme, which is activated by self-cleavage at a specific serine bond to produce a beta-subunit with a hydroxyl group at its C-terminus and an alpha-subunit with a pyruvoyl group at its N-terminus.

The protein resides in the cytoplasm. It carries out the reaction L-aspartate + H(+) = beta-alanine + CO2. Its pathway is cofactor biosynthesis; (R)-pantothenate biosynthesis; beta-alanine from L-aspartate: step 1/1. Catalyzes the pyruvoyl-dependent decarboxylation of aspartate to produce beta-alanine. The chain is Aspartate 1-decarboxylase from Caulobacter vibrioides (strain ATCC 19089 / CIP 103742 / CB 15) (Caulobacter crescentus).